We begin with the raw amino-acid sequence, 591 residues long: Metalloendopeptidase OPG085 (591 aa).

His-41 provides a ligand contact to Zn(2+). The active site involves Glu-44. Residues His-45 and Glu-112 each coordinate Zn(2+).

It belongs to the peptidase M44 family. Zn(2+) is required as a cofactor. Undergoes proteolytic processing during the course of infection. May be cleaved into 46 kDa and 22 kDa products (Potential).

The protein resides in the virion. Functionally, probably involved in maturation of some viral proteins by processing them preferentially at Ala-Gly-|-Ser/Thr/Lys motifs. Does not seem to be responsible for the cleavage of major core proteins. This Variola virus (isolate Human/India/Ind3/1967) (VARV) protein is Metalloendopeptidase OPG085 (OPG085).